The following is a 166-amino-acid chain: Lipoprotein signal peptidase (166 aa).

The next 4 membrane-spanning stretches (helical) occupy residues Ala9 to Leu29, Ala45 to Leu65, Trp71 to Leu91, and Leu99 to Leu119. Catalysis depends on residues Asp126 and Asp144. The chain crosses the membrane as a helical span at residues Trp135 to Ile155.

This sequence belongs to the peptidase A8 family.

Its subcellular location is the cell inner membrane. The catalysed reaction is Release of signal peptides from bacterial membrane prolipoproteins. Hydrolyzes -Xaa-Yaa-Zaa-|-(S,diacylglyceryl)Cys-, in which Xaa is hydrophobic (preferably Leu), and Yaa (Ala or Ser) and Zaa (Gly or Ala) have small, neutral side chains.. It functions in the pathway protein modification; lipoprotein biosynthesis (signal peptide cleavage). Its function is as follows. This protein specifically catalyzes the removal of signal peptides from prolipoproteins. The sequence is that of Lipoprotein signal peptidase from Burkholderia vietnamiensis (strain G4 / LMG 22486) (Burkholderia cepacia (strain R1808)).